Here is a 524-residue protein sequence, read N- to C-terminus: Na(+)/H(+) antiporter NhaB (524 aa).

The next 9 helical transmembrane spans lie at Ile-25–Trp-45, Leu-97–Phe-117, Ile-135–Ile-155, Phe-234–Leu-254, Ala-302–Ile-322, Phe-352–Phe-372, Met-388–Gly-408, Val-445–Leu-465, and Val-474–Ile-494.

This sequence belongs to the NhaB Na(+)/H(+) (TC 2.A.34) antiporter family.

Its subcellular location is the cell inner membrane. The enzyme catalyses 2 Na(+)(in) + 3 H(+)(out) = 2 Na(+)(out) + 3 H(+)(in). In terms of biological role, na(+)/H(+) antiporter that extrudes sodium in exchange for external protons. The protein is Na(+)/H(+) antiporter NhaB of Alteromonas mediterranea (strain DSM 17117 / CIP 110805 / LMG 28347 / Deep ecotype).